The sequence spans 32 residues: U3-theraphotoxin-Hhn1r (32 aa).

Intrachain disulfides connect C2–C15, C9–C20, and C14–C27.

The protein belongs to the neurotoxin 10 (Hwtx-1) family. 16 (Hntx-8) subfamily. Expressed by the venom gland.

The protein localises to the secreted. Functionally, ion channel inhibitor. The protein is U3-theraphotoxin-Hhn1r of Cyriopagopus hainanus (Chinese bird spider).